The following is a 322-amino-acid chain: Extracellular metalloprotease AFUA_1G07730 (322 aa).

The first 22 residues, Met-1 to Ala-22, serve as a signal peptide directing secretion. Asn-123 and Asn-197 each carry an N-linked (GlcNAc...) asparagine glycan. Position 233 (His-233) interacts with Zn(2+). Glu-234 is a catalytic residue. His-237 lines the Zn(2+) pocket. Residues Cys-272 and Cys-299 are joined by a disulfide bond.

Belongs to the peptidase M43B family.

The protein resides in the secreted. In terms of biological role, secreted metalloproteinase that allows assimilation of proteinaceous substrates. Plays a pivotal role as a pathogenicity determinant during infections and contributes to the ability of the pathogen to persist within the mammalian host. The polypeptide is Extracellular metalloprotease AFUA_1G07730 (Aspergillus fumigatus (strain ATCC MYA-4609 / CBS 101355 / FGSC A1100 / Af293) (Neosartorya fumigata)).